Here is a 122-residue protein sequence, read N- to C-terminus: Large ribosomal subunit protein uL14 (122 aa).

It belongs to the universal ribosomal protein uL14 family. Part of the 50S ribosomal subunit. Forms a cluster with proteins L3 and L19. In the 70S ribosome, L14 and L19 interact and together make contacts with the 16S rRNA in bridges B5 and B8.

Its function is as follows. Binds to 23S rRNA. Forms part of two intersubunit bridges in the 70S ribosome. The chain is Large ribosomal subunit protein uL14 from Laribacter hongkongensis (strain HLHK9).